A 445-amino-acid polypeptide reads, in one-letter code: Tubulin beta-9 chain (445 aa).

Positions 11, 69, 138, 142, 143, 144, 204, and 226 each coordinate GTP. E69 is a binding site for Mg(2+). Residues 423-445 form a disordered region; that stretch reads QQYQDATADDEEYEEEEEYEAEA. The span at 429 to 445 shows a compositional bias: acidic residues; the sequence is TADDEEYEEEEEYEAEA.

Belongs to the tubulin family. Dimer of alpha and beta chains. A typical microtubule is a hollow water-filled tube with an outer diameter of 25 nm and an inner diameter of 15 nM. Alpha-beta heterodimers associate head-to-tail to form protofilaments running lengthwise along the microtubule wall with the beta-tubulin subunit facing the microtubule plus end conferring a structural polarity. Microtubules usually have 13 protofilaments but different protofilament numbers can be found in some organisms and specialized cells. Mg(2+) serves as cofactor.

It is found in the cytoplasm. It localises to the cytoskeleton. In terms of biological role, tubulin is the major constituent of microtubules, a cylinder consisting of laterally associated linear protofilaments composed of alpha- and beta-tubulin heterodimers. Microtubules grow by the addition of GTP-tubulin dimers to the microtubule end, where a stabilizing cap forms. Below the cap, tubulin dimers are in GDP-bound state, owing to GTPase activity of alpha-tubulin. The polypeptide is Tubulin beta-9 chain (Gossypium hirsutum (Upland cotton)).